Here is a 165-residue protein sequence, read N- to C-terminus: Cyclic pyranopterin monophosphate synthase (165 aa).

Residues 76 to 78 and 114 to 115 each bind substrate; these read LCH and ME. Asp129 is a catalytic residue.

Belongs to the MoaC family. In terms of assembly, homohexamer; trimer of dimers.

The catalysed reaction is (8S)-3',8-cyclo-7,8-dihydroguanosine 5'-triphosphate = cyclic pyranopterin phosphate + diphosphate. The protein operates within cofactor biosynthesis; molybdopterin biosynthesis. Its function is as follows. Catalyzes the conversion of (8S)-3',8-cyclo-7,8-dihydroguanosine 5'-triphosphate to cyclic pyranopterin monophosphate (cPMP). This chain is Cyclic pyranopterin monophosphate synthase, found in Brucella abortus (strain 2308).